Here is an 874-residue protein sequence, read N- to C-terminus: Protein translocase subunit SecA (874 aa).

ATP-binding positions include Gln-87, 105–109, and Asp-512; that span reads GEGKT. The Zn(2+) site is built by Cys-859, Cys-861, Cys-870, and His-871.

It belongs to the SecA family. In terms of assembly, monomer and homodimer. Part of the essential Sec protein translocation apparatus which comprises SecA, SecYEG and auxiliary proteins SecDF-YajC and YidC. Zn(2+) serves as cofactor.

It is found in the cell inner membrane. The protein localises to the cytoplasm. It catalyses the reaction ATP + H2O + cellular proteinSide 1 = ADP + phosphate + cellular proteinSide 2.. Functionally, part of the Sec protein translocase complex. Interacts with the SecYEG preprotein conducting channel. Has a central role in coupling the hydrolysis of ATP to the transfer of proteins into and across the cell membrane, serving both as a receptor for the preprotein-SecB complex and as an ATP-driven molecular motor driving the stepwise translocation of polypeptide chains across the membrane. This Buchnera aphidicola subsp. Schizaphis graminum (strain Sg) protein is Protein translocase subunit SecA.